Reading from the N-terminus, the 138-residue chain is MRTLWIMAVLLVGVEGHLLQFRKMIKKMTGKEPIVSYAFYGCYCGKGGRGKPKDATDRCCFVHDCCYEKVTGCDPKWDYYTYSSENGDIVCGGDNPCTKEVCECDKAAAICFRDNLKTYKKRYMTFPDIFCTDPTEKC.

Positions 1–16 are cleaved as a signal peptide; the sequence is MRTLWIMAVLLVGVEG. Disulfide bonds link Cys42-Cys131, Cys44-Cys60, Cys59-Cys111, Cys65-Cys138, Cys66-Cys104, Cys73-Cys97, and Cys91-Cys102. Residues Tyr43, Gly45, and Gly47 each contribute to the Ca(2+) site. Residue His63 is part of the active site. Asp64 is a binding site for Ca(2+). Residue Asp105 is part of the active site.

Belongs to the phospholipase A2 family. Group II subfamily. D49 sub-subfamily. Ca(2+) serves as cofactor. Expressed by the venom gland.

It is found in the secreted. The catalysed reaction is a 1,2-diacyl-sn-glycero-3-phosphocholine + H2O = a 1-acyl-sn-glycero-3-phosphocholine + a fatty acid + H(+). PLA2 catalyzes the calcium-dependent hydrolysis of the 2-acyl groups in 3-sn-phosphoglycerides. The sequence is that of Basic phospholipase A2 PL-X' from Protobothrops flavoviridis (Habu).